The primary structure comprises 270 residues: Metallo-beta-lactamase type 2 (270 aa).

Positions 1-28 (MELPNIMHPVAKLSTALAAALMLSGCMP) are cleaved as a signal peptide. H120, H122, D124, H189, and C208 together coordinate Zn(2+). Positions 211 and 220 each coordinate substrate. H250 is a Zn(2+) binding site.

It belongs to the metallo-beta-lactamase superfamily. Class-B beta-lactamase family. As to quaternary structure, monomer. It depends on Zn(2+) as a cofactor.

It is found in the periplasm. It carries out the reaction a beta-lactam + H2O = a substituted beta-amino acid. Its activity is regulated as follows. Inhibits by captopril, thiorphan, dimercaprol and tiopronin. This enzyme is not susceptible to inactivation by the beta-lactamase-blocking agents clavulanic acid. In terms of biological role, confers resistance to the different beta-lactams antibiotics (penicillin, cephalosporin and carbapenem) via the hydrolysis of the beta-lactam ring. Does not confer resistance to the polymixin colistin or the fluoroquinolone ciprofloxacin. The chain is Metallo-beta-lactamase type 2 from Klebsiella pneumoniae.